Here is a 674-residue protein sequence, read N- to C-terminus: Death-associated protein kinase related (674 aa).

In terms of domain architecture, Protein kinase spans 37–295 (EVEQTPFARG…ATGCLDHIWL (259 aa)). ATP contacts are provided by residues 43-51 (FARGKFAAV) and Lys66. The active-site Proton acceptor is Asp160. Disordered stretches follow at residues 308–388 (QPQS…GGSI), 412–440 (TLTS…SDKE), 511–583 (DSSG…TSGS), and 614–650 (TSSA…HHHV). The span at 312–343 (DAEEEEEEDVDDDVEDEEEEEQVEEEEEETQN) shows a compositional bias: acidic residues. Positions 352-363 (PQQQQQPVQQHQ) are enriched in low complexity. Positions 373 to 382 (KPTHNGHHRA) are enriched in basic residues. Phosphoserine occurs at positions 384, 387, 435, 437, and 521. Residues 512 to 525 (SSGSAVARRSGGAV) are compositionally biased toward low complexity. 2 stretches are compositionally biased toward polar residues: residues 526–541 (TSSS…SVRL) and 555–564 (YKKQTSQNGC). Composition is skewed to low complexity over residues 565-583 (SSTS…TSGS) and 614-631 (TSSA…TSAA). Positions 632–650 (HHLHHHHMHHHHHHHHHHV) are enriched in basic residues.

It belongs to the protein kinase superfamily. Ser/Thr protein kinase family.

It catalyses the reaction L-seryl-[protein] + ATP = O-phospho-L-seryl-[protein] + ADP + H(+). The enzyme catalyses L-threonyl-[protein] + ATP = O-phospho-L-threonyl-[protein] + ADP + H(+). The chain is Death-associated protein kinase related (Drak) from Drosophila melanogaster (Fruit fly).